A 382-amino-acid chain; its full sequence is Anhydro-N-acetylmuramic acid kinase (382 aa).

Residue 9–16 participates in ATP binding; sequence GTSLDGID.

The protein belongs to the anhydro-N-acetylmuramic acid kinase family.

The catalysed reaction is 1,6-anhydro-N-acetyl-beta-muramate + ATP + H2O = N-acetyl-D-muramate 6-phosphate + ADP + H(+). It functions in the pathway amino-sugar metabolism; 1,6-anhydro-N-acetylmuramate degradation. It participates in cell wall biogenesis; peptidoglycan recycling. Functionally, catalyzes the specific phosphorylation of 1,6-anhydro-N-acetylmuramic acid (anhMurNAc) with the simultaneous cleavage of the 1,6-anhydro ring, generating MurNAc-6-P. Is required for the utilization of anhMurNAc either imported from the medium or derived from its own cell wall murein, and thus plays a role in cell wall recycling. The protein is Anhydro-N-acetylmuramic acid kinase of Bacillus cereus (strain ZK / E33L).